Reading from the N-terminus, the 1321-residue chain is Insulin receptor substrate 2 (1321 aa).

Positions 1–10 (MASAPLPGPP) are enriched in pro residues. Disordered stretches follow at residues 1–32 (MASA…HSVR) and 51–73 (RGPG…PPRL). The PH domain occupies 16–144 (DGPNLNNNNN…WYRALTDLVS (129 aa)). Positions 18 to 28 (PNLNNNNNNNN) are enriched in low complexity. Residues 191 to 295 (YREVWQVNLK…EAMKALKELF (105 aa)) form the IRS-type PTB domain. A disordered region spans residues 299–536 (PRSKSQSSGS…ARDGSGGELY (238 aa)). Phosphoserine occurs at positions 303 and 343. The residue at position 347 (Thr347) is a Phosphothreonine. Position 362 is a phosphoserine (Ser362). The segment covering 364–376 (GDGGAAGGAGTAG) has biased composition (gly residues). Phosphoserine occurs at positions 381, 385, and 388. Residue Arg409 is modified to Omega-N-methylarginine. Low complexity-rich tracts occupy residues 435-456 (SPPA…SGSY) and 478-490 (PSSG…GSPS). Thr517 carries the phosphothreonine modification. Ser520 is subject to Phosphoserine. Residue Thr524 is modified to Phosphothreonine. Tyr536 bears the Phosphotyrosine; by INSR mark. Residues 536-539 (YGYM) carry the YXXM motif 1 motif. Ser556 is modified (phosphoserine; by PLK1). At Ser573 the chain carries Phosphoserine. Thr575 and Thr576 each carry phosphothreonine. The residue at position 590 (Ser590) is a Phosphoserine. Positions 594-597 (YTLM) match the YXXM motif 2 motif. A phosphoserine mark is found at Ser604 and Ser616. A Phosphotyrosine modification is found at Tyr649. Short sequence motifs (YXXM motif) lie at residues 649–652 (YMPM) and 671–674 (YMPM). A Phosphotyrosine; by INSR modification is found at Tyr671. Phosphoserine occurs at positions 675, 678, 727, and 728. Residues 734–737 (YMRM) carry the YXXM motif 5 motif. Residue Ser762 is modified to Phosphoserine. At Thr771 the chain carries Phosphothreonine. Ser796 carries the phosphoserine modification. The short motif at 814–817 (YVLM) is the YXXM motif 6 element. Ser819 bears the Phosphoserine mark. 2 disordered regions span residues 834-871 (ATPG…RPEG) and 888-1091 (EGLQ…ASPT). The residue at position 907 (Ser907) is a Phosphoserine. Tyr911 is modified (phosphotyrosine; by INSR). Low complexity predominate over residues 930–959 (LLASAASSSSLLSASSPASSLGSGTPGTSS). Position 965 is a phosphoserine (Ser965). A Phosphotyrosine; by INSR modification is found at Tyr970. Positions 1005–1014 (PYPPLPPRPS) are enriched in pro residues. Over residues 1039–1055 (AATSQGPTAGSSMSSEP) the composition is skewed to polar residues. A YXXM motif 7 motif is present at residues 1061-1064 (YTEM). Thr1071 bears the Phosphothreonine mark. Residues 1072–1082 (PPQPIVAPPKP) are compositionally biased toward pro residues. The residue at position 1089 (Ser1089) is a Phosphoserine. Position 1098 is a phosphoserine; by PLK1 (Ser1098). Residues 1110 to 1198 (LQVSQPPDPH…TSPGQAQPLV (89 aa)) are disordered. Residues 1139–1154 (ETFSSTTTVTPVSPSF) are compositionally biased toward low complexity. Thr1148 carries the phosphothreonine modification. Phosphoserine occurs at positions 1151, 1163, 1165, 1175, and 1190. Polar residues predominate over residues 1163-1179 (SASVENVSLRKSSEGSS). Tyr1242 bears the Phosphotyrosine; by INSR mark. Residues 1251 to 1275 (QGSLAQSQPQPGDKNSWSRTRSLGG) form a disordered region. The span at 1253–1271 (SLAQSQPQPGDKNSWSRTR) shows a compositional bias: polar residues. Tyr1303 carries the post-translational modification Phosphotyrosine; by INSR. Lys1314 is covalently cross-linked (Glycyl lysine isopeptide (Lys-Gly) (interchain with G-Cter in ubiquitin)).

As to quaternary structure, interacts with PHIP. Interacts with SH2B1; this interaction enhances leptin-induced activation of the PI3-kinase pathway. Interacts with GRB2. Interacts with PIK3R1. Interacts with DVL2; this interaction promotes the Wnt/beta-catenin signaling pathway. Post-translationally, phosphorylation fluctuates in a cell-cycle dependent manner with hyperphosphorylation during mitosis. Phosphorylated at Ser-556 and Ser-1098 by PLK1; these phosphorylations prevent the activation of the PI3K pathway upon growth factor stimulation by inhibiting the binding between IRS2 and the PI3K pathway components and increasing the level of IRS2 protein degradation. In addition, they prevent premature mitotic exit. Monoubiquitinated by NEDD4; leading to enhanced IGF1 signaling. During cell cycle, ubiquitination and proteasomal degradation are controlled by FZR1. As to expression, skeletal muscle, lung, brain, liver, kidney, heart and spleen.

The protein resides in the cytoplasm. It localises to the cytosol. Its function is as follows. Signaling adapter protein that participates in the signal transduction from two prominent receptor tyrosine kinases, insulin receptor/INSR and insulin-like growth factor I receptor/IGF1R. Plays therefore an important role in development, growth, glucose homeostasis as well as lipid metabolism. Upon phosphorylation by the insulin receptor, functions as a signaling scaffold that propagates insulin action through binding to SH2 domain-containing proteins including the p85 regulatory subunit of PI3K, NCK1, NCK2, GRB2 or SHP2. Recruitment of GRB2 leads to the activation of the guanine nucleotide exchange factor SOS1 which in turn triggers the Ras/Raf/MEK/MAPK signaling cascade. Activation of the PI3K/AKT pathway is responsible for most of insulin metabolic effects in the cell, and the Ras/Raf/MEK/MAPK is involved in the regulation of gene expression and in cooperation with the PI3K pathway regulates cell growth and differentiation. Acts a positive regulator of the Wnt/beta-catenin signaling pathway through suppression of DVL2 autophagy-mediated degradation leading to cell proliferation. Plays a role in cell cycle progression by promoting a robust spindle assembly checkpoint (SAC) during M-phase. In macrophages, IL4-induced tyrosine phosphorylation of IRS2 leads to the recruitment and activation of phosphoinositide 3-kinase (PI3K). This Mus musculus (Mouse) protein is Insulin receptor substrate 2 (Irs2).